An 84-amino-acid polypeptide reads, in one-letter code: Large ribosomal subunit protein bL27 (84 aa).

Residues 1–24 form a disordered region; that stretch reads MAHKKAGGSSRNGRDSKGQRLGCK.

The protein belongs to the bacterial ribosomal protein bL27 family.

The protein is Large ribosomal subunit protein bL27 of Pelobacter propionicus (strain DSM 2379 / NBRC 103807 / OttBd1).